The chain runs to 418 residues: NADH-quinone oxidoreductase subunit D (418 aa).

Belongs to the complex I 49 kDa subunit family. As to quaternary structure, NDH-1 is composed of 14 different subunits. Subunits NuoB, C, D, E, F, and G constitute the peripheral sector of the complex.

The protein resides in the cell inner membrane. The enzyme catalyses a quinone + NADH + 5 H(+)(in) = a quinol + NAD(+) + 4 H(+)(out). In terms of biological role, NDH-1 shuttles electrons from NADH, via FMN and iron-sulfur (Fe-S) centers, to quinones in the respiratory chain. The immediate electron acceptor for the enzyme in this species is believed to be ubiquinone. Couples the redox reaction to proton translocation (for every two electrons transferred, four hydrogen ions are translocated across the cytoplasmic membrane), and thus conserves the redox energy in a proton gradient. The polypeptide is NADH-quinone oxidoreductase subunit D (Bordetella pertussis (strain Tohama I / ATCC BAA-589 / NCTC 13251)).